Here is an 879-residue protein sequence, read N- to C-terminus: Phosphoenolpyruvate carboxylase (879 aa).

Catalysis depends on residues His137 and Lys545.

The protein belongs to the PEPCase type 1 family. Requires Mg(2+) as cofactor.

The catalysed reaction is oxaloacetate + phosphate = phosphoenolpyruvate + hydrogencarbonate. Forms oxaloacetate, a four-carbon dicarboxylic acid source for the tricarboxylic acid cycle. The chain is Phosphoenolpyruvate carboxylase from Yersinia enterocolitica serotype O:8 / biotype 1B (strain NCTC 13174 / 8081).